The following is a 115-amino-acid chain: U3-lycotoxin-Ls1c (115 aa).

A signal peptide spans 1–20 (MKFVLLFGVLLVTLFSYSSA). Positions 21–44 (EMLDDFDQADEDELLSLIEKEEAR) are excised as a propeptide. 4 cysteine pairs are disulfide-bonded: C48-C63, C55-C72, C62-C87, and C74-C85.

The protein belongs to the neurotoxin 19 (CSTX) family. 01 subfamily. As to expression, expressed by the venom gland.

It localises to the secreted. The sequence is that of U3-lycotoxin-Ls1c from Lycosa singoriensis (Wolf spider).